We begin with the raw amino-acid sequence, 243 residues long: Tegument protein UL14 homolog (243 aa).

This sequence belongs to the alphaherpesvirinae HHV-1 UL14 protein family. In terms of processing, phosphorylated.

Its subcellular location is the virion tegument. It localises to the host cytoplasm. It is found in the host nucleus. Contributes to the nuclear transport of the viral transcriptional activator VP16 homolog during the early phase of infection. Therefore, participates indirectly in the regulation of the immediate-early gene expression. Additionally, seems to be important for efficient nuclear targeting of capsids. In Gallid herpesvirus 2 (strain Chicken/Md5/ATCC VR-987) (GaHV-2), this protein is Tegument protein UL14 homolog (MDV026).